The sequence spans 131 residues: Histone H2A type 1-A (131 aa).

A disordered region spans residues methionine 1–glycine 23. Serine 2 carries the N-acetylserine modification. Position 2 is a phosphoserine; by RPS6KA5 (serine 2). The residue at position 4 (arginine 4) is a Citrulline; alternate. Arginine 4 carries the post-translational modification Symmetric dimethylarginine; by PRMT5; alternate. Lysine 6 bears the N6-(2-hydroxyisobutyryl)lysine mark. The span at glutamine 7–serine 19 shows a compositional bias: basic residues. Lysine 10 bears the N6-(2-hydroxyisobutyryl)lysine; alternate mark. Lysine 10 carries the post-translational modification N6-(beta-hydroxybutyryl)lysine; alternate. An N6-lactoyllysine; alternate modification is found at lysine 10. Lysine 10 is modified (N6-succinyllysine; alternate). The residue at position 14 (lysine 14) is an N6-(beta-hydroxybutyryl)lysine. Residues lysine 14 and lysine 16 each participate in a glycyl lysine isopeptide (Lys-Gly) (interchain with G-Cter in ubiquitin) cross-link. The residue at position 37 (lysine 37) is an N6-(2-hydroxyisobutyryl)lysine; alternate. Lysine 37 is subject to N6-(beta-hydroxybutyryl)lysine; alternate. Lysine 37 is modified (N6-crotonyllysine; alternate). N6-(2-hydroxyisobutyryl)lysine occurs at positions 75 and 76. An N6-(2-hydroxyisobutyryl)lysine; alternate modification is found at lysine 96. Lysine 96 carries the post-translational modification N6-(beta-hydroxybutyryl)lysine; alternate. An N6-succinyllysine; alternate modification is found at lysine 96. At lysine 96 the chain carries N6-glutaryllysine; alternate. At glutamine 105 the chain carries N5-methylglutamine. Residue lysine 119 is modified to N6-(2-hydroxyisobutyryl)lysine; alternate. The residue at position 119 (lysine 119) is an N6-(beta-hydroxybutyryl)lysine; alternate. 2 positions are modified to N6-crotonyllysine; alternate: lysine 119 and lysine 120. N6-glutaryllysine; alternate is present on residues lysine 119 and lysine 120. Lysine 120 is covalently cross-linked (Glycyl lysine isopeptide (Lys-Gly) (interchain with G-Cter in ubiquitin); alternate). Position 121 is a phosphothreonine; by DCAF1 (threonine 121). Lysine 127 carries the N6-crotonyllysine modification.

This sequence belongs to the histone H2A family. As to quaternary structure, the nucleosome is a histone octamer containing two molecules each of H2A, H2B, H3 and H4 assembled in one H3-H4 heterotetramer and two H2A-H2B heterodimers. The octamer wraps approximately 147 bp of DNA. In terms of processing, deiminated on Arg-4 in granulocytes upon calcium entry. Post-translationally, monoubiquitination of Lys-120 (H2AK119Ub) by RING1, TRIM37 and RNF2/RING2 complex gives a specific tag for epigenetic transcriptional repression and participates in X chromosome inactivation of female mammals. It is involved in the initiation of both imprinted and random X inactivation. Ubiquitinated H2A is enriched in inactive X chromosome chromatin. Ubiquitination of H2A functions downstream of methylation of 'Lys-27' of histone H3 (H3K27me). H2AK119Ub by RNF2/RING2 can also be induced by ultraviolet and may be involved in DNA repair. Monoubiquitination of Lys-120 (H2AK119Ub) by TRIM37 may promote transformation of cells in a number of breast cancers. Following DNA double-strand breaks (DSBs), it is ubiquitinated through 'Lys-63' linkage of ubiquitin moieties by the E2 ligase UBE2N and the E3 ligases RNF8 and RNF168, leading to the recruitment of repair proteins to sites of DNA damage. Ubiquitination at Lys-14 and Lys-16 (H2AK13Ub and H2AK15Ub, respectively) in response to DNA damage is initiated by RNF168 that mediates monoubiquitination at these 2 sites, and 'Lys-63'-linked ubiquitin are then conjugated to monoubiquitin; RNF8 is able to extend 'Lys-63'-linked ubiquitin chains in vitro. Deubiquitinated by USP51 at Lys-14 and Lys-16 (H2AK13Ub and H2AK15Ub, respectively) after damaged DNA is repaired. H2AK119Ub and ionizing radiation-induced 'Lys-63'-linked ubiquitination (H2AK13Ub and H2AK15Ub) are distinct events. Phosphorylation on Ser-2 (H2AS1ph) is enhanced during mitosis. Phosphorylation on Ser-2 by RPS6KA5/MSK1 directly represses transcription. Acetylation of H3 inhibits Ser-2 phosphorylation by RPS6KA5/MSK1. Phosphorylation at Thr-121 (H2AT120ph) by DCAF1 is present in the regulatory region of many tumor suppresor genes and down-regulates their transcription. In terms of processing, glutamine methylation at Gln-105 (H2AQ104me) by FBL is specifically dedicated to polymerase I. It is present at 35S ribosomal DNA locus and impairs binding of the FACT complex. Post-translationally, symmetric dimethylation on Arg-4 by the PRDM1/PRMT5 complex may play a crucial role in the germ-cell lineage. Crotonylation (Kcr) is specifically present in male germ cells and marks testis-specific genes in post-meiotic cells, including X-linked genes that escape sex chromosome inactivation in haploid cells. Crotonylation marks active promoters and enhancers and confers resistance to transcriptional repressors. It is also associated with post-meiotically activated genes on autosomes. In terms of processing, lactylated in macrophages by EP300/P300 by using lactoyl-CoA directly derived from endogenous or exogenous lactate, leading to stimulates gene transcription.

Its subcellular location is the nucleus. The protein localises to the chromosome. Its function is as follows. Core component of nucleosome. Nucleosomes wrap and compact DNA into chromatin, limiting DNA accessibility to the cellular machineries which require DNA as a template. Histones thereby play a central role in transcription regulation, DNA repair, DNA replication and chromosomal stability. DNA accessibility is regulated via a complex set of post-translational modifications of histones, also called histone code, and nucleosome remodeling. This is Histone H2A type 1-A from Homo sapiens (Human).